We begin with the raw amino-acid sequence, 899 residues long: Linoleate 13S-lipoxygenase 2-1, chloroplastic (899 aa).

A chloroplast-targeting transit peptide spans 1 to 40 (MLKPQLQQSSQSTKALIPSWNTNPLFLASFPINILNKNFR). The region spanning 78 to 200 (VQKQVNLNLS…DNPDKRIFFT (123 aa)) is the PLAT domain. In terms of domain architecture, Lipoxygenase spans 203-899 (SYLPSQTPSG…GKGVPYSISI (697 aa)). Residues 252–287 (SNNDDAKRPVLGGKELPYPRRCKTGRPRSKKDPLSE) form a disordered region. Over residues 271 to 280 (RRCKTGRPRS) the composition is skewed to basic residues. Residues His557, His562, His749, Asn753, and Ile899 each contribute to the Fe cation site.

The protein belongs to the lipoxygenase family. As to quaternary structure, monomer. Requires Fe cation as cofactor. In terms of tissue distribution, expressed in leaves and floral buds.

It is found in the plastid. Its subcellular location is the chloroplast stroma. The protein resides in the chloroplast thylakoid. The catalysed reaction is (9Z,12Z)-octadecadienoate + O2 = (13S)-hydroperoxy-(9Z,11E)-octadecadienoate. It catalyses the reaction (9Z,12Z,15Z)-octadecatrienoate + O2 = (13S)-hydroperoxy-(9Z,11E,15Z)-octadecatrienoate. It participates in lipid metabolism; oxylipin biosynthesis. Its function is as follows. Plant lipoxygenase involved in a number of diverse aspects of plant physiology including growth and development, pest resistance, and senescence. May not be involved in the bulk production of jasmonate upon wounding. Catalyzes the hydroperoxidation of lipids containing a cis,cis-1,4-pentadiene structure. Linolenic acid is the preferred substrate, before linoleic and arachidonic acids. Also has some activity with phosphatidylglycerol, but not with galactolipids. The polypeptide is Linoleate 13S-lipoxygenase 2-1, chloroplastic (Solanum tuberosum (Potato)).